Here is a 112-residue protein sequence, read N- to C-terminus: Putative pterin-4-alpha-carbinolamine dehydratase (112 aa).

It belongs to the pterin-4-alpha-carbinolamine dehydratase family.

It catalyses the reaction (4aS,6R)-4a-hydroxy-L-erythro-5,6,7,8-tetrahydrobiopterin = (6R)-L-erythro-6,7-dihydrobiopterin + H2O. In Shewanella sp. (strain ANA-3), this protein is Putative pterin-4-alpha-carbinolamine dehydratase.